The sequence spans 825 residues: Thioredoxin domain-containing protein 16 (825 aa).

An N-terminal signal peptide occupies residues methionine 1 to serine 27. A Thioredoxin domain is found at leucine 392–asparagine 495. A disulfide bond links cysteine 449 and cysteine 456. Residue asparagine 460 is glycosylated (N-linked (GlcNAc...) asparagine). A disordered region spans residues arginine 762–valine 787. Residues cysteine 767–valine 787 show a composition bias toward basic and acidic residues. Positions aspartate 816 to leucine 819 match the Mediates endoplasmic reticulum retention motif.

In terms of assembly, interacts with FOXRED2. Post-translationally, glycosylated.

The protein localises to the secreted. It localises to the endoplasmic reticulum lumen. The protein is Thioredoxin domain-containing protein 16 of Homo sapiens (Human).